We begin with the raw amino-acid sequence, 237 residues long: Small ribosomal subunit protein uS2 (237 aa).

It belongs to the universal ribosomal protein uS2 family.

In Clostridioides difficile (strain 630) (Peptoclostridium difficile), this protein is Small ribosomal subunit protein uS2.